Here is a 174-residue protein sequence, read N- to C-terminus: Putative serine protease 46 (174 aa).

Residues 43–174 (VVKGKLVEVG…IGWGTTGKKG (132 aa)) form the Peptidase S1 domain. A disulfide bridge links cysteine 68 with cysteine 84. Active-site charge relay system residues include histidine 83 and aspartate 128.

It belongs to the peptidase S1 family.

In Homo sapiens (Human), this protein is Putative serine protease 46.